The following is a 190-amino-acid chain: MAYIAKSFYDLSAIGLDGEKIDFNTFRGRAVLIENVASLUGTTTRDYTQLNELQCRFPRRLVVLGFPCNQFGHQENCQNEEILNSLKYVRHGGGFQPTFSLTQKCDVNGQNQHPVFAYLKDKLPYPYDDPFSLMTDPKLIIWSPVRRSDVSWNFEKFLIGPEGEPFRRYSRTFQTINIEPDIKRLLKVAI.

Sec40 is an active-site residue. Position 40 (Sec40) is a non-standard amino acid, selenocysteine.

This sequence belongs to the glutathione peroxidase family. Homotetramer. Mucosal epithelium of the gastrointestinal tract.

It localises to the cytoplasm. Its subcellular location is the cytosol. It catalyses the reaction 2 glutathione + H2O2 = glutathione disulfide + 2 H2O. It carries out the reaction a hydroperoxy polyunsaturated fatty acid + 2 glutathione = a hydroxy polyunsaturated fatty acid + glutathione disulfide + H2O. The enzyme catalyses tert-butyl hydroperoxide + 2 glutathione = tert-butanol + glutathione disulfide + H2O. The catalysed reaction is cumene hydroperoxide + 2 glutathione = 2-phenylpropan-2-ol + glutathione disulfide + H2O. It catalyses the reaction (13S)-hydroperoxy-(9Z,11E)-octadecadienoate + 2 glutathione = (13S)-hydroxy-(9Z,11E)-octadecadienoate + glutathione disulfide + H2O. It carries out the reaction (5S)-hydroperoxy-(6E,8Z,11Z,14Z)-eicosatetraenoate + 2 glutathione = (5S)-hydroxy-(6E,8Z,11Z,14Z)-eicosatetraenoate + glutathione disulfide + H2O. The enzyme catalyses (12R)-hydroperoxy-(5Z,8Z,10E,14Z)-eicosatetraenoate + 2 glutathione = (12R)-hydroxy-(5Z,8Z,10E,14Z)-eicosatetraenoate + glutathione disulfide + H2O. The catalysed reaction is (15S)-hydroperoxy-(5Z,8Z,11Z,13E)-eicosatetraenoate + 2 glutathione = (15S)-hydroxy-(5Z,8Z,11Z,13E)-eicosatetraenoate + glutathione disulfide + H2O. Functionally, catalyzes the reduction of hydroperoxides in a glutathione-dependent manner thus regulating cellular redox homeostasis. Can reduce small soluble hydroperoxide such as H2O2. Can reduce cumene hydroperoxide and tert-butyl hydroperoxide, as well as several fatty acid-derived hydroperoxides. Cannot reduce phosphatidycholine hydroperoxide. This is Glutathione peroxidase 2 (Gpx2) from Rattus norvegicus (Rat).